The sequence spans 342 residues: Methionyl-tRNA formyltransferase (342 aa).

110-113 (SLLP) is a binding site for (6S)-5,6,7,8-tetrahydrofolate.

Belongs to the Fmt family.

It carries out the reaction L-methionyl-tRNA(fMet) + (6R)-10-formyltetrahydrofolate = N-formyl-L-methionyl-tRNA(fMet) + (6S)-5,6,7,8-tetrahydrofolate + H(+). Attaches a formyl group to the free amino group of methionyl-tRNA(fMet). The formyl group appears to play a dual role in the initiator identity of N-formylmethionyl-tRNA by promoting its recognition by IF2 and preventing the misappropriation of this tRNA by the elongation apparatus. In Synechococcus sp. (strain CC9311), this protein is Methionyl-tRNA formyltransferase.